We begin with the raw amino-acid sequence, 212 residues long: ER lumen protein-retaining receptor 1 (212 aa).

Residues 1 to 4 (MNLF) are Lumenal-facing. Residues 5-24 (RFLGDLSHLLAIILLLLKIW) traverse the membrane as a helical segment. Over 25 to 32 (KSRSCAGI) the chain is Cytoplasmic. The chain crosses the membrane as a helical span at residues 33–52 (SGKSQVLFAVVFTARYLDLF). Residues 47 to 48 (RY) form an interaction with the K-D-E-L motif on target proteins region. The Lumenal segment spans residues 53–58 (TNYISL). The chain crosses the membrane as a helical span at residues 59–79 (YNTCMKVVYIACSFTTVWMIY). Residues 80–92 (SKFKATYDGNHDT) are Cytoplasmic-facing. A helical transmembrane segment spans residues 93–110 (FRVEFLVVPTAILAFLVN). The Lumenal portion of the chain corresponds to 111 to 116 (HDFTPL). The helical transmembrane segment at 117–135 (EILWTFSIYLESVAILPQL) threads the bilayer. Residues 136 to 149 (FMVSKTGEAETITS) lie on the Cytoplasmic side of the membrane. The chain crosses the membrane as a helical span at residues 150–168 (HYLFALGVYRTLYLFNWIW). The interval 159–169 (RTLYLFNWIWR) is interaction with the K-D-E-L motif on target proteins. Topologically, residues 169–178 (RYHFEGFFDL) are lumenal. Residues 179–199 (IAIVAGLVQTVLYCDFFYLYI) form a helical membrane-spanning segment. The Cytoplasmic portion of the chain corresponds to 200–212 (TKVLKGKKLSLPA). The tract at residues 204–207 (KGKK) is important for recycling of cargo proteins with the sequence motif K-D-E-L from the Golgi to the endoplasmic reticulum. Residue Ser-209 is modified to Phosphoserine; by PKA.

The protein belongs to the ERD2 family. Upon ligand binding the receptor oligomerizes and interacts with components of the transport machinery such as ARFGAP1 and ARF1. Post-translationally, phosphorylation by PKA at Ser-209 is required for endoplasmic reticulum retention function.

The protein localises to the golgi apparatus membrane. The protein resides in the cytoplasmic vesicle. It is found in the COPI-coated vesicle membrane. It localises to the endoplasmic reticulum membrane. Its subcellular location is the endoplasmic reticulum-Golgi intermediate compartment membrane. Functionally, receptor for the C-terminal sequence motif K-D-E-L that is present on endoplasmic reticulum resident proteins and that mediates their recycling from the Golgi back to the endoplasmic reticulum. This chain is ER lumen protein-retaining receptor 1 (Kdelr1), found in Mus musculus (Mouse).